The following is a 325-amino-acid chain: Tetraacyldisaccharide 4'-kinase (325 aa).

Position 58–65 (58–65 (TVGGSGKT)) interacts with ATP.

The protein belongs to the LpxK family.

It catalyses the reaction a lipid A disaccharide + ATP = a lipid IVA + ADP + H(+). Its pathway is glycolipid biosynthesis; lipid IV(A) biosynthesis; lipid IV(A) from (3R)-3-hydroxytetradecanoyl-[acyl-carrier-protein] and UDP-N-acetyl-alpha-D-glucosamine: step 6/6. Transfers the gamma-phosphate of ATP to the 4'-position of a tetraacyldisaccharide 1-phosphate intermediate (termed DS-1-P) to form tetraacyldisaccharide 1,4'-bis-phosphate (lipid IVA). This is Tetraacyldisaccharide 4'-kinase from Coxiella burnetii (strain Dugway 5J108-111).